The sequence spans 443 residues: Histidinol dehydrogenase (443 aa).

The NAD(+) site is built by tyrosine 133, glutamine 191, and asparagine 214. Serine 240, glutamine 262, and histidine 265 together coordinate substrate. Zn(2+) is bound by residues glutamine 262 and histidine 265. Catalysis depends on proton acceptor residues glutamate 329 and histidine 330. The substrate site is built by histidine 330, aspartate 363, glutamate 417, and histidine 422. Aspartate 363 serves as a coordination point for Zn(2+). Histidine 422 is a Zn(2+) binding site.

This sequence belongs to the histidinol dehydrogenase family. Homodimer. Zn(2+) is required as a cofactor.

It carries out the reaction L-histidinol + 2 NAD(+) + H2O = L-histidine + 2 NADH + 3 H(+). Its pathway is amino-acid biosynthesis; L-histidine biosynthesis; L-histidine from 5-phospho-alpha-D-ribose 1-diphosphate: step 9/9. In terms of biological role, catalyzes the sequential NAD-dependent oxidations of L-histidinol to L-histidinaldehyde and then to L-histidine. This is Histidinol dehydrogenase from Yersinia pestis.